Reading from the N-terminus, the 579-residue chain is YTH domain-containing family protein 2 (579 aa).

Residues 1 to 45 form a disordered region; sequence MSASSLLEQRPKGQGNKVQNGSVHQKDGLNDDDFEPYLSPQARPN. Position 2 is an N-acetylserine (S2). 6 positions are modified to phosphoserine: S2, S4, S5, S22, S39, and S196. Positions 2–384 are localization to mRNA processing bodies (P-bodies); sequence SASSLLEQRP…QAGSGSTPSE (383 aa). Residues 247 to 387 are disordered; sequence AKQQPKLKTK…SGSTPSEPHP (141 aa). Residues 291 to 316 show a composition bias toward polar residues; the sequence is ALVQNIGQPTQGSPQHVGQQANNSPP. Residues 337 to 349 are compositionally biased toward low complexity; it reads AQLSVQQQAAQPT. Phosphoserine is present on S359. A compositionally biased stretch (gly residues) spans 359 to 371; the sequence is SGFGHNGVDGNGV. Positions 372–383 are enriched in polar residues; sequence GQSQAGSGSTPS. The interaction with m6A-containing mRNAs stretch occupies residues 385 to 579; it reads PHPVLEKLRS…VKKERQGRGK (195 aa). A Phosphoserine modification is found at S394. A YTH domain is found at 410–544; it reads GRVFIIKSYS…EKAKQVLKII (135 aa). RNA contacts are provided by residues 416-418, D422, 432-433, N462, W486, and W491; these read KSY and WC.

Belongs to the YTHDF family. YTHDF2 subfamily. In terms of assembly, interacts with CNOT1; interaction is direct and promotes recruitment of the CCR4-NOT complex. Interacts with YTHDF3. Interacts with RIDA/HRSP12; interaction leads to recruitment of the ribonuclease P/MRP complex. Ubiquitinated by the SCF(SKP2) complex, leading to its degradation.

The protein resides in the cytoplasm. Its subcellular location is the cytosol. The protein localises to the P-body. It is found in the stress granule. It localises to the nucleus. Its function is as follows. Specifically recognizes and binds N6-methyladenosine (m6A)-containing RNAs, and regulates their stability. M6A is a modification present at internal sites of mRNAs and some non-coding RNAs and plays a role in mRNA stability and processing. Acts as a regulator of mRNA stability by promoting degradation of m6A-containing mRNAs via interaction with the CCR4-NOT and ribonuclease P/MRP complexes, depending on the context. The YTHDF paralogs (YTHDF1, YTHDF2 and YTHDF3) share m6A-containing mRNAs targets and act redundantly to mediate mRNA degradation and cellular differentiation. M6A-containing mRNAs containing a binding site for RIDA/HRSP12 (5'-GGUUC-3') are preferentially degraded by endoribonucleolytic cleavage: cooperative binding of RIDA/HRSP12 and YTHDF2 to transcripts leads to recruitment of the ribonuclease P/MRP complex. Other m6A-containing mRNAs undergo deadenylation via direct interaction between YTHDF2 and CNOT1, leading to recruitment of the CCR4-NOT and subsequent deadenylation of m6A-containing mRNAs. Required maternally to regulate oocyte maturation: probably acts by binding to m6A-containing mRNAs, thereby regulating maternal transcript dosage during oocyte maturation, which is essential for the competence of oocytes to sustain early zygotic development. Also required during spermatogenesis: regulates spermagonial adhesion by promoting degradation of m6A-containing transcripts coding for matrix metallopeptidases. Also involved in hematopoietic stem cells specification by binding to m6A-containing mRNAs, leading to promote their degradation. Also acts as a regulator of neural development by promoting m6A-dependent degradation of neural development-related mRNA targets. Inhibits neural specification of induced pluripotent stem cells by binding to methylated neural-specific mRNAs and promoting their degradation, thereby restraining neural differentiation. Regulates circadian regulation of hepatic lipid metabolism: acts by promoting m6A-dependent degradation of PPARA transcripts. Regulates the innate immune response to infection by inhibiting the type I interferon response: acts by binding to m6A-containing IFNB transcripts and promoting their degradation. May also act as a promoter of cap-independent mRNA translation following heat shock stress: upon stress, relocalizes to the nucleus and specifically binds mRNAs with some m6A methylation mark at their 5'-UTR, protecting demethylation of mRNAs by FTO, thereby promoting cap-independent mRNA translation. Regulates mitotic entry by promoting the phase-specific m6A-dependent degradation of WEE1 transcripts. Promotes formation of phase-separated membraneless compartments, such as P-bodies or stress granules, by undergoing liquid-liquid phase separation upon binding to mRNAs containing multiple m6A-modified residues: polymethylated mRNAs act as a multivalent scaffold for the binding of YTHDF proteins, juxtaposing their disordered regions and thereby leading to phase separation. The resulting mRNA-YTHDF complexes then partition into different endogenous phase-separated membraneless compartments, such as P-bodies, stress granules or neuronal RNA granules. May also recognize and bind RNAs modified by C5-methylcytosine (m5C) and act as a regulator of rRNA processing. In Macaca fascicularis (Crab-eating macaque), this protein is YTH domain-containing family protein 2.